Here is a 67-residue protein sequence, read N- to C-terminus: Small ribosomal subunit protein eS31 (67 aa).

The Zn(2+) site is built by Cys31, Cys34, Cys49, and Cys52. Residues 31–52 (CPKCGAGVFMAEHLNRFACGKC) form a C4-type zinc finger.

This sequence belongs to the eukaryotic ribosomal protein eS31 family. As to quaternary structure, part of the 30S ribosomal subunit. It depends on Zn(2+) as a cofactor.

In Methanococcus maripaludis (strain C5 / ATCC BAA-1333), this protein is Small ribosomal subunit protein eS31.